Reading from the N-terminus, the 213-residue chain is ATP-dependent Clp protease proteolytic subunit 1 (213 aa).

Ser-108 serves as the catalytic Nucleophile. His-133 is an active-site residue.

The protein belongs to the peptidase S14 family. As to quaternary structure, fourteen ClpP subunits assemble into 2 heptameric rings which stack back to back to give a disk-like structure with a central cavity, resembling the structure of eukaryotic proteasomes.

It localises to the cytoplasm. The enzyme catalyses Hydrolysis of proteins to small peptides in the presence of ATP and magnesium. alpha-casein is the usual test substrate. In the absence of ATP, only oligopeptides shorter than five residues are hydrolyzed (such as succinyl-Leu-Tyr-|-NHMec, and Leu-Tyr-Leu-|-Tyr-Trp, in which cleavage of the -Tyr-|-Leu- and -Tyr-|-Trp bonds also occurs).. In terms of biological role, cleaves peptides in various proteins in a process that requires ATP hydrolysis. Has a chymotrypsin-like activity. Plays a major role in the degradation of misfolded proteins. The protein is ATP-dependent Clp protease proteolytic subunit 1 of Frankia casuarinae (strain DSM 45818 / CECT 9043 / HFP020203 / CcI3).